A 328-amino-acid polypeptide reads, in one-letter code: MVKLAIDMMGGDNAPDIVLEAVQKAVEDFKDLEIILFGDEKKYKLNHERIEFRHCSEKIEMEDEPVRAIKRKKDSSMVKMAEAVKSGEADGCVSAGNTGALMSAGLFIVGRIKGVARPALVVTLPTIDGKGFVFLDVGANADAKPEHLLQYAQLGDIYAQKIRGIDNPKISLLNIGTEPAKGNSLTKKSYELLNQDHSLNFVGNIEAKTLMDGDTDVVVTDGYTGNMVLKNLEGTAKSIGKMLKDTIMSSTKNKLAGAILKKDLAEFAKKMDYSEYGGSVLLGLEGTVVKAHGSSNAKAFYSAIRQAKIAGEQNIVQTMKETVGESNE.

This sequence belongs to the PlsX family. In terms of assembly, homodimer. Probably interacts with PlsY.

It localises to the cytoplasm. The catalysed reaction is a fatty acyl-[ACP] + phosphate = an acyl phosphate + holo-[ACP]. It participates in lipid metabolism; phospholipid metabolism. In terms of biological role, catalyzes the reversible formation of acyl-phosphate (acyl-PO(4)) from acyl-[acyl-carrier-protein] (acyl-ACP). This enzyme utilizes acyl-ACP as fatty acyl donor, but not acyl-CoA. In Staphylococcus aureus (strain bovine RF122 / ET3-1), this protein is Phosphate acyltransferase.